A 76-amino-acid polypeptide reads, in one-letter code: ATP synthase subunit 9, mitochondrial (76 aa).

The next 2 helical transmembrane spans lie at 14-34 and 56-76; these read ISTI…AALI and ALSE…LFAV.

Belongs to the ATPase C chain family. In terms of assembly, F-type ATPases have 2 components, CF(1) - the catalytic core - and CF(0) - the membrane proton channel. CF(1) has five subunits: alpha(3), beta(3), gamma(1), delta(1), epsilon(1). CF(0) has three main subunits: a, b and c.

It is found in the mitochondrion membrane. Mitochondrial membrane ATP synthase (F(1)F(0) ATP synthase or Complex V) produces ATP from ADP in the presence of a proton gradient across the membrane which is generated by electron transport complexes of the respiratory chain. F-type ATPases consist of two structural domains, F(1) - containing the extramembraneous catalytic core and F(0) - containing the membrane proton channel, linked together by a central stalk and a peripheral stalk. During catalysis, ATP synthesis in the catalytic domain of F(1) is coupled via a rotary mechanism of the central stalk subunits to proton translocation. Part of the complex F(0) domain. A homomeric c-ring of probably 10 subunits is part of the complex rotary element. In Candida glabrata (strain ATCC 2001 / BCRC 20586 / JCM 3761 / NBRC 0622 / NRRL Y-65 / CBS 138) (Yeast), this protein is ATP synthase subunit 9, mitochondrial (ATP9).